The following is a 395-amino-acid chain: Phosphoglycerate kinase (395 aa).

Residues 21–23 (DLN), Arg-36, 59–62 (HLGR), Arg-113, and Arg-146 each bind substrate. ATP-binding positions include Lys-197, Glu-324, and 350-353 (GGDT).

Belongs to the phosphoglycerate kinase family. As to quaternary structure, monomer.

Its subcellular location is the cytoplasm. The catalysed reaction is (2R)-3-phosphoglycerate + ATP = (2R)-3-phospho-glyceroyl phosphate + ADP. It participates in carbohydrate degradation; glycolysis; pyruvate from D-glyceraldehyde 3-phosphate: step 2/5. This is Phosphoglycerate kinase from Acinetobacter baylyi (strain ATCC 33305 / BD413 / ADP1).